Reading from the N-terminus, the 636-residue chain is Probable cyclin-dependent serine/threonine-protein kinase DDB_G0278487 (636 aa).

A disordered region spans residues 1–41 (MPSQSNNVITSSTASSSMSSSSNSSDASSTSSSNTNNAHSS). The 280-residue stretch at 64 to 343 (YEIISKIGEG…AEQALQSPFF (280 aa)) folds into the Protein kinase domain. Residues 70–78 (IGEGISGSV) and Lys93 contribute to the ATP site. The active-site Proton acceptor is Asp184. Disordered regions lie at residues 378–408 (EQQKKQEEQKKQQEEQKKLEDQKKQEEQKKQ), 473–506 (KRQQQEHEQRLQREQQQQLNQLQQQKESPLNNSY), 527–555 (SETESEYESDEEDFYTEEEVEDYSSDEED), and 579–636 (NNQQ…LTIH). Residues 473–485 (KRQQQEHEQRLQR) show a composition bias toward basic and acidic residues. Over residues 486-499 (EQQQQLNQLQQQKE) the composition is skewed to low complexity. Positions 529 to 555 (TESEYESDEEDFYTEEEVEDYSSDEED) are enriched in acidic residues. Low complexity-rich tracts occupy residues 579-594 (NNQQHQQQYPYSQQQQ) and 617-628 (NNNNGNNNNNNN).

It belongs to the protein kinase superfamily. CMGC Ser/Thr protein kinase family. CDC2/CDKX subfamily.

It catalyses the reaction L-seryl-[protein] + ATP = O-phospho-L-seryl-[protein] + ADP + H(+). It carries out the reaction L-threonyl-[protein] + ATP = O-phospho-L-threonyl-[protein] + ADP + H(+). The chain is Probable cyclin-dependent serine/threonine-protein kinase DDB_G0278487 from Dictyostelium discoideum (Social amoeba).